Reading from the N-terminus, the 488-residue chain is Cytochrome P450 family 716 subfamily AD polypeptide 2 (488 aa).

A helical transmembrane segment spans residues 5–25 (LLLLSTLLILTLCCHFFYLFI). Residue C433 coordinates heme.

Belongs to the cytochrome P450 family. It depends on heme as a cofactor. In terms of tissue distribution, expressed in maturing fruits and in juice vesicles.

Its subcellular location is the membrane. The catalysed reaction is (1R,2R,3S,8R,10R,11R,15S,16S)-3-(acetyloxy)-15-[(4R)-4-[(2S)-3,3-dimethyloxiran-2-yl]-1,4-dihydroxybutan-2-yl]-2,7,7,11,16-pentamethyl-5-oxo-6-oxatetracyclo[9.7.0.0(2,8).0(12,16)]octadec-12-en-10-yl acetate + reduced [NADPH--hemoprotein reductase] + O2 = (1R,2R,3S,8R,10R,11R,15S,16S)-3-(acetyloxy)-15-(1-hydroxy-4-oxobutan-2-yl)-2,7,7,11,16-pentamethyl-5-oxo-6-oxatetracyclo[9.7.0.0(2,8).0(12,16)]octadec-12-en-10-yl acetate + 2-methylpropanoate + oxidized [NADPH--hemoprotein reductase] + H2O + 2 H(+). It functions in the pathway secondary metabolite biosynthesis; terpenoid biosynthesis. Its function is as follows. Monooxygenase involved in the biosynthesis of limonoids triterpene natural products such as limonin, a compound with insecticidal activity responsible for the bitter taste in citrus. Catalyzes the formation of (1R,2R,3S,8R,10R,11R,15S,16S)-3-(acetyloxy)-15-(1-hydroxy-4-oxobutan-2-yl)-2,7,7,11,16-pentamethyl-5-oxo-6-oxatetracyclo[9.7.0.0(2,8).0(12,16)]octadec-12-en-10-yl acetate. The polypeptide is Cytochrome P450 family 716 subfamily AD polypeptide 2 (Citrus sinensis (Sweet orange)).